We begin with the raw amino-acid sequence, 309 residues long: Coproporphyrin III ferrochelatase (309 aa).

Residues Tyr12, Arg29, 45 to 46 (RY), Ser53, and Tyr124 each bind Fe-coproporphyrin III. Residues His182 and Glu263 each contribute to the Fe(2+) site.

It belongs to the ferrochelatase family.

It is found in the cytoplasm. The catalysed reaction is Fe-coproporphyrin III + 2 H(+) = coproporphyrin III + Fe(2+). It participates in porphyrin-containing compound metabolism; protoheme biosynthesis. Involved in coproporphyrin-dependent heme b biosynthesis. Catalyzes the insertion of ferrous iron into coproporphyrin III to form Fe-coproporphyrin III. The chain is Coproporphyrin III ferrochelatase from Listeria monocytogenes serotype 4b (strain F2365).